We begin with the raw amino-acid sequence, 612 residues long: Chaperone protein DnaK (612 aa).

Threonine 173 is modified (phosphothreonine; by autocatalysis). The segment at 576 to 612 (AAKAQQAEGGANAEGKKADDNVVDAEYEEVKDDETKK) is disordered. Low complexity predominate over residues 578–588 (KAQQAEGGANA). Over residues 596-612 (NVVDAEYEEVKDDETKK) the composition is skewed to acidic residues.

This sequence belongs to the heat shock protein 70 family.

Its function is as follows. Acts as a chaperone. The polypeptide is Chaperone protein DnaK (Bacillus velezensis (strain DSM 23117 / BGSC 10A6 / LMG 26770 / FZB42) (Bacillus amyloliquefaciens subsp. plantarum)).